The following is a 673-amino-acid chain: Xaa-Pro aminopeptidase 2 (673 aa).

A signal peptide spans 1 to 21 (MAQACWGCYPWLVLICACAWG). Residues asparagine 34, asparagine 48, and asparagine 64 are each glycosylated (N-linked (GlcNAc...) asparagine). Residue arginine 115 participates in substrate binding. 3 N-linked (GlcNAc...) asparagine glycosylation sites follow: asparagine 277, asparagine 290, and asparagine 294. Histidine 429 provides a ligand contact to substrate. Mn(2+) is bound at residue aspartate 449. Residues aspartate 449, aspartate 460, and histidine 523 each coordinate Zn(2+). Residues histidine 523, histidine 532, and glutamate 554 each contribute to the substrate site. Residues glutamate 554 and glutamate 568 each contribute to the Zn(2+) site. Alanine 649 carries the GPI-anchor amidated alanine lipid modification. Residues 650–673 (RAAPTTSLGSLMTVSALAILGWSV) constitute a propeptide, removed in mature form.

This sequence belongs to the peptidase M24B family. In terms of assembly, homotrimer. Zn(2+) is required as a cofactor. In terms of processing, N-glycosylated. In terms of tissue distribution, kidney.

It localises to the cell membrane. The catalysed reaction is Release of any N-terminal amino acid, including proline, that is linked to proline, even from a dipeptide or tripeptide.. Its activity is regulated as follows. Inhibited by apstatin and the metal ion chelator EDTA. Potently inhibited by the converting enzyme inhibitors cilazaprilat; enalaprilat; L155,212; ramiprilat and YS 980. Also inhibited to a lesser extent by indolaprilat; quinaprilat; spiraprilat; captopril and zofenoprilat. Membrane-bound metalloprotease which catalyzes the removal of a penultimate prolyl residue from the N-termini of peptides, such as Arg-Pro-Pro. May play a role in the metabolism of the vasodilator bradykinin. This chain is Xaa-Pro aminopeptidase 2 (XPNPEP2), found in Sus scrofa (Pig).